A 264-amino-acid polypeptide reads, in one-letter code: Nuclear egress protein 1 (264 aa).

Over residues 1-12 the composition is skewed to basic residues; it reads MTVHKNRFRRSR. A disordered region spans residues 1–22; that stretch reads MTVHKNRFRRSRSLSVTHRIQK. A CCCH-type zinc finger spans residues 83–187; that stretch reads CLEFSPYANE…HIVFQSRTLH (105 aa).

This sequence belongs to the herpesviridae NEC1 protein family. In terms of assembly, forms a heterohexameric complex with NEC2. Interacts with capsid vertex specific component 2/CVC2; this interaction directs the capsid to the host inner nuclear membrane to initiate budding. Post-translationally, phosphorylated at serine residues in the N-terminus. This phosphorylation regulates the localization within the inner nuclear membrane.

The protein localises to the host nucleus inner membrane. Its function is as follows. Plays an essential role in virion nuclear egress, the first step of virion release from infected cell. Within the host nucleus, NEC1 interacts with the newly formed capsid through the vertexes and directs it to the inner nuclear membrane by associating with NEC2. Induces the budding of the capsid at the inner nuclear membrane as well as its envelopment into the perinuclear space. There, the NEC1/NEC2 complex promotes the fusion of the enveloped capsid with the outer nuclear membrane and the subsequent release of the viral capsid into the cytoplasm where it will reach the secondary budding sites in the host Golgi or trans-Golgi network. This Human herpesvirus 6B (HHV-6 variant B) protein is Nuclear egress protein 1.